Here is a 219-residue protein sequence, read N- to C-terminus: Oxaloacetate tautomerase YcgM (219 aa).

Mg(2+) is bound by residues Glu70, Glu72, and Asp101.

The protein belongs to the FAH family. It depends on a divalent metal cation as a cofactor.

The enzyme catalyses oxaloacetate = enol-oxaloacetate. Functionally, tautomerase that converts enol-oxaloacetate to the keto form of oxaloacetate. The sequence is that of Oxaloacetate tautomerase YcgM from Escherichia coli (strain K12).